The sequence spans 392 residues: Phospho-N-acetylmuramoyl-pentapeptide-transferase (392 aa).

The next 10 membrane-spanning stretches (helical) occupy residues 28–48 (RALM…PYVI), 74–94 (TPTM…LMWF), 100–120 (FVWI…VDDW), 137–157 (YFWQ…SISE), 193–213 (VSYP…IVGA), 225–245 (GLAI…AYVT), 262–282 (SGEL…FLWF), 289–309 (VFMG…IAVI), 314–334 (IVFF…MAQV), and 369–389 (QVVV…LSTL).

Belongs to the glycosyltransferase 4 family. MraY subfamily. The cofactor is Mg(2+).

Its subcellular location is the cell inner membrane. It catalyses the reaction UDP-N-acetyl-alpha-D-muramoyl-L-alanyl-gamma-D-glutamyl-meso-2,6-diaminopimeloyl-D-alanyl-D-alanine + di-trans,octa-cis-undecaprenyl phosphate = di-trans,octa-cis-undecaprenyl diphospho-N-acetyl-alpha-D-muramoyl-L-alanyl-D-glutamyl-meso-2,6-diaminopimeloyl-D-alanyl-D-alanine + UMP. It participates in cell wall biogenesis; peptidoglycan biosynthesis. In terms of biological role, catalyzes the initial step of the lipid cycle reactions in the biosynthesis of the cell wall peptidoglycan: transfers peptidoglycan precursor phospho-MurNAc-pentapeptide from UDP-MurNAc-pentapeptide onto the lipid carrier undecaprenyl phosphate, yielding undecaprenyl-pyrophosphoryl-MurNAc-pentapeptide, known as lipid I. In Variovorax paradoxus (strain S110), this protein is Phospho-N-acetylmuramoyl-pentapeptide-transferase.